A 233-amino-acid chain; its full sequence is Chaperone protein MrkB (233 aa).

The first 18 residues, 1–18, serve as a signal peptide directing secretion; the sequence is MKRIALFFCFIFSFAAHA.

Belongs to the periplasmic pilus chaperone family.

It is found in the periplasm. Functionally, mediates assembly of pili by forming soluble multimeric complexes with pili subunits as an intermediate step in the assembly process. This protein is involved in type 3 pili assembly. The sequence is that of Chaperone protein MrkB (mrkB) from Klebsiella pneumoniae.